A 265-amino-acid chain; its full sequence is Sulfur carrier protein FdhD (265 aa).

Cys-107 functions as the Cysteine persulfide intermediate in the catalytic mechanism.

The protein belongs to the FdhD family.

The protein resides in the cytoplasm. Required for formate dehydrogenase (FDH) activity. Acts as a sulfur carrier protein that transfers sulfur from IscS to the molybdenum cofactor prior to its insertion into FDH. This Staphylococcus aureus (strain NCTC 8325 / PS 47) protein is Sulfur carrier protein FdhD.